Reading from the N-terminus, the 336-residue chain is tRNA-cytidine(32) 2-sulfurtransferase (336 aa).

The tract at residues 1-42 (MNAPDTLTGLEANAPVTEEAPAASEAERKRAHTRREQKEQYE) is disordered. A PP-loop motif motif is present at residues 75-80 (SGGKDS). [4Fe-4S] cluster-binding residues include Cys-150, Cys-153, and Cys-241. Residues 301 to 328 (PHGDIAFDEEPCSADSASNQTQRPSQTV) are disordered. The span at 315–328 (DSASNQTQRPSQTV) shows a compositional bias: polar residues.

The protein belongs to the TtcA family. Homodimer. The cofactor is Mg(2+). Requires [4Fe-4S] cluster as cofactor.

Its subcellular location is the cytoplasm. It catalyses the reaction cytidine(32) in tRNA + S-sulfanyl-L-cysteinyl-[cysteine desulfurase] + AH2 + ATP = 2-thiocytidine(32) in tRNA + L-cysteinyl-[cysteine desulfurase] + A + AMP + diphosphate + H(+). The protein operates within tRNA modification. Catalyzes the ATP-dependent 2-thiolation of cytidine in position 32 of tRNA, to form 2-thiocytidine (s(2)C32). The sulfur atoms are provided by the cysteine/cysteine desulfurase (IscS) system. This is tRNA-cytidine(32) 2-sulfurtransferase from Paraburkholderia phymatum (strain DSM 17167 / CIP 108236 / LMG 21445 / STM815) (Burkholderia phymatum).